Consider the following 66-residue polypeptide: SPbeta prophage-derived uncharacterized protein YosK (66 aa).

In Bacillus subtilis (strain 168), this protein is SPbeta prophage-derived uncharacterized protein YosK (yosK).